We begin with the raw amino-acid sequence, 3133 residues long: Probable polyketide synthase 38 (3133 aa).

Positions 9 to 440 (DDDVAVIGIG…GSNVCLILSE (432 aa)) constitute a Ketosynthase family 3 (KS3) domain. Residues Cys-181, His-320, and His-363 each act as for beta-ketoacyl synthase activity in the active site. The acyl/malonyl transferase stretch occupies residues 647–680 (GVSADIIIGHSLGEISSAYCSGMIDFQTLCYLTY). Ser-657 serves as the catalytic For acyl/malonyl transferase activity. Residues 945-1067 (GPSIHSLGNN…GNFSLSKHNI (123 aa)) are N-terminal hotdog fold. The PKS/mFAS DH domain occupies 945–1248 (GPSIHSLGNN…CTIVASNPDS (304 aa)). The Proton acceptor; for dehydratase activity role is filled by His-979. The interval 1083–1248 (NFTCISKQDL…CTIVASNPDS (166 aa)) is C-terminal hotdog fold. Asp-1155 serves as the catalytic Proton donor; for dehydratase activity. Residues 1370-1408 (NNNNNNNNNNNNNNNNNNNNNNNNNNNNNNNNNDNDNDN) form a disordered region. A Carrier domain is found at 2562–2639 (NNNEIIRSTI…QSIEIIKSAH (78 aa)). Ser-2599 carries the O-(pantetheine 4'-phosphoryl)serine modification. Residues 2649 to 2711 (NNNNSNHHDN…NNNNNNNNNN (63 aa)) adopt a coiled-coil conformation. 2 disordered regions span residues 2691–2715 (LNNNNNNNNNNNNNNNNNNNNNNNN) and 2794–2817 (GNISNDKLNSSNSNSDNSNNNNNQ). Low complexity-rich tracts occupy residues 2692-2715 (NNNNNNNNNNNNNNNNNNNNNNNN) and 2795-2817 (NISNDKLNSSNSNSDNSNNNNNQ).

Pantetheine 4'-phosphate serves as cofactor.

Probable polyketide synthase. This Dictyostelium discoideum (Social amoeba) protein is Probable polyketide synthase 38 (pks38).